The following is a 195-amino-acid chain: Thioredoxin reductase-like selenoprotein T (195 aa).

A signal peptide spans 1–19; that stretch reads MRLLLLLLVAASAVVRSDA. Residues 46–49 constitute a cross-link (cysteinyl-selenocysteine (Cys-Sec)); sequence CVSU. Position 49 (U49) is a non-standard amino acid, selenocysteine. Residues 85–103 traverse the membrane as a helical segment; sequence IASFLSVFKLVLIGLIIVG.

Belongs to the SelWTH family. Selenoprotein T subfamily. Post-translationally, may contain a selenide-sulfide bond between Cys-46 and Sec-49. This bond is speculated to serve as redox-active pair.

Its subcellular location is the endoplasmic reticulum membrane. The catalysed reaction is [thioredoxin]-dithiol + NADP(+) = [thioredoxin]-disulfide + NADPH + H(+). In terms of biological role, selenoprotein with thioredoxin reductase-like oxidoreductase activity. Protects dopaminergic neurons against oxidative stress and cell death. Involved in ADCYAP1/PACAP-induced calcium mobilization and neuroendocrine secretion. Plays a role in fibroblast anchorage and redox regulation. In gastric smooth muscle, modulates the contraction processes through the regulation of calcium release and MYLK activation. In pancreatic islets, involved in the control of glucose homeostasis, contributes to prolonged ADCYAP1/PACAP-induced insulin secretion. This is Thioredoxin reductase-like selenoprotein T from Bos taurus (Bovine).